The primary structure comprises 107 residues: uncharacterized protein (107 aa).

The signal sequence occupies residues 1 to 18 (MRTLMLIILSILIYLSSA).

This is an uncharacterized protein from Caenorhabditis elegans.